The sequence spans 571 residues: Putative phospholipase B-like 1 (571 aa).

An N-terminal signal peptide occupies residues 1–18 (MNWIFIFLAAAVAIGCEA). N-linked (GlcNAc...) asparagine glycosylation is found at Asn-62, Asn-149, Asn-442, and Asn-473.

It belongs to the phospholipase B-like family.

It is found in the lysosome. Its function is as follows. Putative phospholipase. The chain is Putative phospholipase B-like 1 from Caenorhabditis elegans.